A 424-amino-acid polypeptide reads, in one-letter code: Enolase (424 aa).

(2R)-2-phosphoglycerate is bound at residue Gln-162. Glu-204 (proton donor) is an active-site residue. Residues Asp-241, Glu-284, and Asp-311 each contribute to the Mg(2+) site. Residues Lys-336, Arg-365, Ser-366, and Lys-387 each coordinate (2R)-2-phosphoglycerate. Catalysis depends on Lys-336, which acts as the Proton acceptor.

Belongs to the enolase family. Mg(2+) serves as cofactor.

The protein resides in the cytoplasm. It localises to the secreted. Its subcellular location is the cell surface. The catalysed reaction is (2R)-2-phosphoglycerate = phosphoenolpyruvate + H2O. It participates in carbohydrate degradation; glycolysis; pyruvate from D-glyceraldehyde 3-phosphate: step 4/5. Its function is as follows. Catalyzes the reversible conversion of 2-phosphoglycerate (2-PG) into phosphoenolpyruvate (PEP). It is essential for the degradation of carbohydrates via glycolysis. The sequence is that of Enolase from Agrobacterium fabrum (strain C58 / ATCC 33970) (Agrobacterium tumefaciens (strain C58)).